Here is a 62-residue protein sequence, read N- to C-terminus: Kurtoxin-like I (62 aa).

The 61-residue stretch at 2 to 62 (IDGYPVDNWN…ARIKRGGRCN (61 aa)) folds into the LCN-type CS-alpha/beta domain. 4 cysteine pairs are disulfide-bonded: Cys-12-Cys-61, Cys-16-Cys-37, Cys-23-Cys-44, and Cys-27-Cys-46.

Expressed by the venom gland.

Its subcellular location is the secreted. In terms of biological role, this neurotoxin acts on sodium and calcium channels. Potently inhibits native voltage-gated T-type calcium channel activity in mouse male germ cells and weakly blocks Cav3.3/CACNA1I channels expressed in Xenopus oocytes. In addition, significantly slows the inactivation of activated recombinant sodium channels (Nav1.5/SCN5A). The polypeptide is Kurtoxin-like I (Parabuthus granulatus (Granulated thick-tailed scorpion)).